An 801-amino-acid polypeptide reads, in one-letter code: Cation/H(+) antiporter 28 (801 aa).

The next 12 helical transmembrane spans lie at 24–44 (ALKI…HYLM), 77–97 (SITL…VMGL), 113–133 (FIAY…TPFL), 140–160 (PYIF…PILT), 179–199 (AAGV…FIFF), 216–236 (LLMF…SPIF), 252–272 (GSHL…PTWP), 275–292 (SMYN…FLPN), 304–324 (INYL…GFII), 343–363 (LLGT…LLLG), 371–391 (SLGL…ALAI), and 403–423 (LIIF…MDII).

This sequence belongs to the monovalent cation:proton antiporter 2 (CPA2) transporter (TC 2.A.37) family. CHX (TC 2.A.37.4) subfamily. As to expression, specifically expressed in pollen.

Its subcellular location is the membrane. May operate as a cation/H(+) antiporter. This is Cation/H(+) antiporter 28 (CHX28) from Arabidopsis thaliana (Mouse-ear cress).